Reading from the N-terminus, the 287-residue chain is Pantothenate synthetase (287 aa).

30-37 (MGNLHSGH) serves as a coordination point for ATP. The Proton donor role is filled by His-37. Residue Gln-61 participates in (R)-pantoate binding. Gln-61 is a binding site for beta-alanine. 149–152 (GEKD) contacts ATP. Position 155 (Gln-155) interacts with (R)-pantoate. ATP-binding positions include Val-178 and 186-189 (LSSR).

It belongs to the pantothenate synthetase family. In terms of assembly, homodimer.

It localises to the cytoplasm. It catalyses the reaction (R)-pantoate + beta-alanine + ATP = (R)-pantothenate + AMP + diphosphate + H(+). The protein operates within cofactor biosynthesis; (R)-pantothenate biosynthesis; (R)-pantothenate from (R)-pantoate and beta-alanine: step 1/1. Catalyzes the condensation of pantoate with beta-alanine in an ATP-dependent reaction via a pantoyl-adenylate intermediate. The polypeptide is Pantothenate synthetase (Pseudomonas putida (strain ATCC 47054 / DSM 6125 / CFBP 8728 / NCIMB 11950 / KT2440)).